A 148-amino-acid chain; its full sequence is Vascular endothelial growth factor homolog (148 aa).

A signal peptide spans 1 to 25 (MKLTATLQVVVALLICMYNLPECVS). 3 disulfides stabilise this stretch: Cys-46/Cys-88, Cys-77/Cys-130, and Cys-81/Cys-132. Asn-95 carries an N-linked (GlcNAc...) asparagine; by host glycan.

It belongs to the PDGF/VEGF growth factor family. In terms of assembly, homodimer; disulfide-linked.

The protein localises to the secreted. Functionally, induces endothelial proliferation. The protein is Vascular endothelial growth factor homolog of Orf virus (strain NZ7) (OV NZ-7).